Consider the following 328-residue polypeptide: MKSLVRVAVTGAAGQIGYSLLFRIAAGEMFGKDRPVILQMLELPDEKAQAALKGVMMELEDCAFPLLAGMVGTDNPDIAFKDADVALLVGSRPRGPGMERKDLLMENAKIFTAQGAALNKVARRDVKVLVVGNPANTNAYIAMKSAPDLNPKHFTAMLRLDHNRALSQLSTKLSKPVANIEKLIVWGNHSPTMYPDYRFATADGTPIIEAINDQAWNANSFIPTVSKRGAAIIEVRGLSSAASAANAAIDHMRDWLLGSNGKWITMGVPSDGSYGIPEGMIFGFPVTTTNGEYSIVKDLPIDTFSKTYIDKTLAELEEERASIAHLLR.

Glycine 11–glycine 17 provides a ligand contact to NAD(+). Substrate contacts are provided by arginine 94 and arginine 100. NAD(+)-binding positions include asparagine 107, glutamine 114, and valine 131 to asparagine 133. Residues asparagine 133 and arginine 164 each contribute to the substrate site. Catalysis depends on histidine 189, which acts as the Proton acceptor.

The protein belongs to the LDH/MDH superfamily. MDH type 2 family.

The enzyme catalyses (S)-malate + NAD(+) = oxaloacetate + NADH + H(+). Functionally, catalyzes the reversible oxidation of malate to oxaloacetate. In Xylella fastidiosa (strain 9a5c), this protein is Malate dehydrogenase.